A 419-amino-acid polypeptide reads, in one-letter code: Adenylosuccinate synthetase 1 (419 aa).

11 to 17 (GDEGKGK) provides a ligand contact to GTP. Asp12 functions as the Proton acceptor in the catalytic mechanism. Mg(2+) contacts are provided by Asp12 and Gly39. Residues 12 to 15 (DEGK), 37 to 40 (NAGH), Arg138, Gln220, and Arg298 each bind IMP. His40 functions as the Proton donor in the catalytic mechanism. 294–300 (TVSKRPR) contacts substrate. GTP contacts are provided by residues Arg300, 326–328 (NVD), and 407–409 (SYG).

The protein belongs to the adenylosuccinate synthetase family. In terms of assembly, homodimer. Mg(2+) is required as a cofactor.

The protein localises to the cytoplasm. The catalysed reaction is IMP + L-aspartate + GTP = N(6)-(1,2-dicarboxyethyl)-AMP + GDP + phosphate + 2 H(+). It functions in the pathway purine metabolism; AMP biosynthesis via de novo pathway; AMP from IMP: step 1/2. Its function is as follows. Plays an important role in the de novo pathway of purine nucleotide biosynthesis. Catalyzes the first committed step in the biosynthesis of AMP from IMP. In Photorhabdus laumondii subsp. laumondii (strain DSM 15139 / CIP 105565 / TT01) (Photorhabdus luminescens subsp. laumondii), this protein is Adenylosuccinate synthetase 1.